A 247-amino-acid polypeptide reads, in one-letter code: PsbP domain-containing protein 3, chloroplastic (247 aa).

The N-terminal 26 residues, 1–26, are a transit peptide targeting the chloroplast; the sequence is MAAISPWLSSPQSFSNPRVTITDSRR. A thylakoid-targeting transit peptide spans 27 to 80; it reads CSSISAAISVLDSSNEEQHRISSRDHVGMKRRDVMLQIASSVFFLPLAISPAFA.

This sequence belongs to the PsbP family.

Its subcellular location is the plastid. The protein localises to the chloroplast thylakoid lumen. This is PsbP domain-containing protein 3, chloroplastic (PPD3) from Arabidopsis thaliana (Mouse-ear cress).